The chain runs to 1257 residues: uncharacterized protein (1257 aa).

Residues 1 to 26 (MNFSNKPNKSRKKSNRKNKKSNKSNT) are disordered. The segment covering 8–22 (NKSRKKSNRKNKKSN) has biased composition (basic residues).

It is found in the virion. This is an uncharacterized protein from Acanthamoeba polyphaga mimivirus (APMV).